The sequence spans 263 residues: 4-hydroxy-tetrahydrodipicolinate reductase (263 aa).

Residues 7–12, 96–98, and 122–125 each bind NAD(+); these read GFKGRM, GTT, and APNF. Residue histidine 152 is the Proton donor/acceptor of the active site. Position 153 (histidine 153) interacts with (S)-2,3,4,5-tetrahydrodipicolinate. The active-site Proton donor is the lysine 156. 162 to 163 is a (S)-2,3,4,5-tetrahydrodipicolinate binding site; that stretch reads GT.

The protein belongs to the DapB family.

It is found in the cytoplasm. It carries out the reaction (S)-2,3,4,5-tetrahydrodipicolinate + NAD(+) + H2O = (2S,4S)-4-hydroxy-2,3,4,5-tetrahydrodipicolinate + NADH + H(+). The catalysed reaction is (S)-2,3,4,5-tetrahydrodipicolinate + NADP(+) + H2O = (2S,4S)-4-hydroxy-2,3,4,5-tetrahydrodipicolinate + NADPH + H(+). The protein operates within amino-acid biosynthesis; L-lysine biosynthesis via DAP pathway; (S)-tetrahydrodipicolinate from L-aspartate: step 4/4. Its function is as follows. Catalyzes the conversion of 4-hydroxy-tetrahydrodipicolinate (HTPA) to tetrahydrodipicolinate. This chain is 4-hydroxy-tetrahydrodipicolinate reductase, found in Listeria innocua serovar 6a (strain ATCC BAA-680 / CLIP 11262).